Consider the following 1385-residue polypeptide: L-2-aminoadipate reductase large subunit (1385 aa).

Residues 843 to 920 form the Carrier domain; sequence SSFSPLEQEI…ELAKEISRVR (78 aa). Ser-880 carries the O-(pantetheine 4'-phosphoryl)serine modification.

This sequence belongs to the ATP-dependent AMP-binding enzyme family. In terms of assembly, heterodimer of an alpha and a beta subunit. Requires pantetheine 4'-phosphate as cofactor.

It catalyses the reaction (S)-2-amino-6-oxohexanoate + NADP(+) + H2O = L-2-aminoadipate + NADPH + 2 H(+). The enzyme catalyses (S)-2-amino-6-oxohexanoate + NAD(+) + H2O = L-2-aminoadipate + NADH + 2 H(+). It carries out the reaction (S)-2-amino-6-oxohexanoate + AMP + diphosphate + NADP(+) = L-2-aminoadipate + ATP + NADPH + H(+). Its pathway is amino-acid biosynthesis; L-lysine biosynthesis via AAA pathway; L-lysine from L-alpha-aminoadipate (fungal route): step 1/3. In terms of biological role, catalyzes the activation of alpha-aminoadipate by ATP-dependent adenylation and the reduction of activated alpha-aminoadipate by NADPH. The activated alpha-aminoadipate is bound to the phosphopantheinyl group of the enzyme itself before it is reduced to (S)-2-amino-6-oxohexanoate. This is L-2-aminoadipate reductase large subunit (LYS2) from Eremothecium gossypii (strain ATCC 10895 / CBS 109.51 / FGSC 9923 / NRRL Y-1056) (Yeast).